The primary structure comprises 334 residues: Ornithine carbamoyltransferase, catabolic (334 aa).

Residues 57–60 (STRT), Gln84, Arg108, and 135–138 (HPTQ) each bind carbamoyl phosphate. L-ornithine is bound by residues Asn168, Asp232, and 236–237 (SM). Residues 274–275 (CL) and Arg320 each bind carbamoyl phosphate.

The protein belongs to the aspartate/ornithine carbamoyltransferase superfamily. OTCase family.

Its subcellular location is the cytoplasm. It catalyses the reaction carbamoyl phosphate + L-ornithine = L-citrulline + phosphate + H(+). Its pathway is amino-acid degradation; L-arginine degradation via ADI pathway; carbamoyl phosphate from L-arginine: step 2/2. Its function is as follows. Reversibly catalyzes the transfer of the carbamoyl group from carbamoyl phosphate (CP) to the N(epsilon) atom of ornithine (ORN) to produce L-citrulline. This is Ornithine carbamoyltransferase, catabolic (arcB) from Rhizobium meliloti (strain 1021) (Ensifer meliloti).